The sequence spans 328 residues: Cell division protein ZipA (328 aa).

The Periplasmic segment spans residues 1 to 6; that stretch reads MMQDLR. A helical transmembrane segment spans residues 7 to 27; it reads LILIVVGAIAIIALLLHGLWT. Topologically, residues 28-328 are cytoplasmic; it reads SRKERSSLFR…REVLDANTIA (301 aa). Basic and acidic residues predominate over residues 61–72; the sequence is GEVRVRTSHPQE. The interval 61–183 is disordered; sequence GEVRVRTSHP…EPVAPAPEAK (123 aa). 2 stretches are compositionally biased toward polar residues: residues 95–104 and 164–174; these read KSAQVKTASR and APQQHVESQQE.

Belongs to the ZipA family. In terms of assembly, interacts with FtsZ via their C-terminal domains.

It localises to the cell inner membrane. Essential cell division protein that stabilizes the FtsZ protofilaments by cross-linking them and that serves as a cytoplasmic membrane anchor for the Z ring. Also required for the recruitment to the septal ring of downstream cell division proteins. The sequence is that of Cell division protein ZipA from Yersinia pestis bv. Antiqua (strain Antiqua).